The following is a 432-amino-acid chain: MDALEKGAATSGPAPRGRPSRGRPPKLQRSRGAGRGLEKPPHLAALVLARGGSKGIPLKNIKRLAGVPLIGWVLRAALDAGVFQSVWVSTDHDEIENVAKQFGAQVHRRSSETSKDSSTSLDAIVEFLNYHNEVDIVGNIQATSPCLHPTDLQKVAEMIREEGYDSVFSVVRRHQFRWSEIQKGVREVTEPLNLNPAKRPRRQDWDGELYENGSFYFAKRHLIEMGYLQGGKMAYYEMRAEHSVDIDVDIDWPIAEQRVLRFGYFGKEKLKEIKLLVCNIDGCLTNGHIYVSGDQKEIISYDVKDAIGISLLKKSGIEVRLISERACSKQTLSALKLDCKTEVSVSDKLATVDEWRKEMGLCWKEVAYLGNEVSDEECLKRVGLSAVPADACSRAQKAVGYICKCSGGRGAIREFAEHIFLLLEKVNNSCQK.

At methionine 1 the chain carries N-acetylmethionine. The segment at 1 to 38 is disordered; it reads MDALEKGAATSGPAPRGRPSRGRPPKLQRSRGAGRGLE. The BC1 motif motif lies at 15–31; the sequence is PRGRPSRGRPPKLQRSR. Basic residues predominate over residues 18–29; that stretch reads RPSRGRPPKLQR. Omega-N-methylarginine occurs at positions 35 and 50. Substrate-binding residues include arginine 50, asparagine 60, arginine 109, serine 118, serine 120, and glutamine 141. A BC2 motif motif is present at residues 198 to 204; sequence KRPRRQD. Residue arginine 199 is part of the active site. Positions 267–274 match the BC3 motif motif; the sequence is KEKLKEIK.

The protein belongs to the CMP-NeuNAc synthase family. Homotetramer; the active enzyme is formed by a dimer of dimers. As to expression, liver.

It localises to the nucleus. It catalyses the reaction an N-acylneuraminate + CTP = a CMP-N-acyl-beta-neuraminate + diphosphate. Its pathway is amino-sugar metabolism; N-acetylneuraminate metabolism. Catalyzes the activation of N-acetylneuraminic acid (NeuNAc) to cytidine 5'-monophosphate N-acetylneuraminic acid (CMP-NeuNAc), a substrate required for the addition of sialic acid. Has some activity toward NeuNAc, N-glycolylneuraminic acid (Neu5Gc) or 2-keto-3-deoxy-D-glycero-D-galacto-nononic acid (KDN). In Rattus norvegicus (Rat), this protein is N-acylneuraminate cytidylyltransferase (Cmas).